The sequence spans 776 residues: Methionine--tRNA ligase (776 aa).

A 'HIGH' region motif is present at residues 10 to 20 (PYSNGPIHLGH). 4 residues coordinate Zn(2+): Cys143, Cys146, Cys156, and Cys159. The 'KMSKS' region signature appears at 375–379 (KFSKS). An ATP-binding site is contributed by Lys378. A tRNA-binding domain is found at 676–776 (DFAKLDMRVG…KPISLGSKVR (101 aa)).

Belongs to the class-I aminoacyl-tRNA synthetase family. MetG type 1 subfamily. In terms of assembly, homodimer. Requires Zn(2+) as cofactor.

It localises to the cytoplasm. It catalyses the reaction tRNA(Met) + L-methionine + ATP = L-methionyl-tRNA(Met) + AMP + diphosphate. In terms of biological role, is required not only for elongation of protein synthesis but also for the initiation of all mRNA translation through initiator tRNA(fMet) aminoacylation. The sequence is that of Methionine--tRNA ligase (metG) from Nanoarchaeum equitans (strain Kin4-M).